The following is a 189-amino-acid chain: Interferon alpha-1 (189 aa).

A signal peptide spans 1-23 (MAPTSAFLTALVLLSCNAICSLG). Cystine bridges form between Cys24/Cys122 and Cys52/Cys162.

The protein belongs to the alpha/beta interferon family. In terms of assembly, interacts with CR2.

It is found in the secreted. In terms of biological role, produced by macrophages, IFN-alpha have antiviral activities. Interferon stimulates the production of two enzymes: a protein kinase and an oligoadenylate synthetase. The protein is Interferon alpha-1 of Sus scrofa (Pig).